Consider the following 235-residue polypeptide: LexA repressor (235 aa).

The H-T-H motif DNA-binding region spans 26-46 (FDEMKEALDLASKSGIHRLIT). The interval 72-104 (QATTAAPPKGRGAFRPQVLEGGGQAPTTSAQPQ) is disordered. Catalysis depends on for autocatalytic cleavage activity residues S156 and K193.

Belongs to the peptidase S24 family. As to quaternary structure, homodimer.

It carries out the reaction Hydrolysis of Ala-|-Gly bond in repressor LexA.. In terms of biological role, represses a number of genes involved in the response to DNA damage (SOS response), including recA and lexA. In the presence of single-stranded DNA, RecA interacts with LexA causing an autocatalytic cleavage which disrupts the DNA-binding part of LexA, leading to derepression of the SOS regulon and eventually DNA repair. The sequence is that of LexA repressor from Caulobacter sp. (strain K31).